The primary structure comprises 466 residues: 3-isopropylmalate dehydratase large subunit (466 aa).

Residues Cys347, Cys407, and Cys410 each contribute to the [4Fe-4S] cluster site.

The protein belongs to the aconitase/IPM isomerase family. LeuC type 1 subfamily. As to quaternary structure, heterodimer of LeuC and LeuD. Requires [4Fe-4S] cluster as cofactor.

The catalysed reaction is (2R,3S)-3-isopropylmalate = (2S)-2-isopropylmalate. The protein operates within amino-acid biosynthesis; L-leucine biosynthesis; L-leucine from 3-methyl-2-oxobutanoate: step 2/4. In terms of biological role, catalyzes the isomerization between 2-isopropylmalate and 3-isopropylmalate, via the formation of 2-isopropylmaleate. This is 3-isopropylmalate dehydratase large subunit from Vibrio vulnificus (strain YJ016).